A 326-amino-acid polypeptide reads, in one-letter code: Protein-arginine N-acetylglucosaminyltransferase NleB2 (326 aa).

Residues 45 to 47 (QWF), tyrosine 69, and 216 to 219 (YLDM) each bind UDP-N-acetyl-alpha-D-glucosamine. Positions 218–220 (DMD) match the DXD motif motif. Aspartate 220 contacts Mn(2+). Glutamate 250 functions as the Proton acceptor in the catalytic mechanism. 2 residues coordinate Mn(2+): asparagine 317 and serine 319. UDP-N-acetyl-alpha-D-glucosamine contacts are provided by residues serine 319 and 324–326 (SSW).

It belongs to the glycosyltransferase NleB family. Mn(2+) is required as a cofactor.

The protein resides in the secreted. Its subcellular location is the host cell. The catalysed reaction is L-arginyl-[protein] + UDP-N-acetyl-alpha-D-glucosamine = N(omega)-(N-acetyl-beta-D-glucosaminyl)-L-arginyl-[protein] + UDP + H(+). Its function is as follows. Protein-arginine N-acetylglucosaminyltransferase effector that catalyzes the transfer of a single N-acetylglucosamine (GlcNAc) to a conserved arginine residue of host target proteins. In contrast to NleB1, not able to disrupt TNF signaling in infected cells. Shows a lower enzymatic activity than NleB1. The chain is Protein-arginine N-acetylglucosaminyltransferase NleB2 from Escherichia coli O145:H28 (strain RM12581).